A 293-amino-acid chain; its full sequence is N-acetylneuraminate lyase (293 aa).

The aceneuramate site is built by Ser48 and Ser49. Catalysis depends on Tyr137, which acts as the Proton donor. Lys165 (schiff-base intermediate with substrate) is an active-site residue. Residues Thr167, Gly189, Asp191, Glu192, and Ser208 each coordinate aceneuramate.

It belongs to the DapA family. NanA subfamily. In terms of assembly, homotetramer.

It localises to the cytoplasm. The enzyme catalyses aceneuramate = aldehydo-N-acetyl-D-mannosamine + pyruvate. Its pathway is amino-sugar metabolism; N-acetylneuraminate degradation; D-fructose 6-phosphate from N-acetylneuraminate: step 1/5. Catalyzes the reversible aldol cleavage of N-acetylneuraminic acid (sialic acid; Neu5Ac) to form pyruvate and N-acetylmannosamine (ManNAc) via a Schiff base intermediate. The sequence is that of N-acetylneuraminate lyase from Staphylococcus aureus (strain bovine RF122 / ET3-1).